A 235-amino-acid polypeptide reads, in one-letter code: Calcium-activated potassium channel subunit beta-2 (235 aa).

The interval 1 to 45 (MFIWTSGRTSSSYRHDEKRNIYQKIRDHDLLDKRKTVTALKAGED) is ball and chain. Residues 1-46 (MFIWTSGRTSSSYRHDEKRNIYQKIRDHDLLDKRKTVTALKAGEDR) are Cytoplasmic-facing. A helical membrane pass occupies residues 47–67 (AILLGLAMMVCSIMMYFLLGI). The Extracellular segment spans residues 68–194 (TLLRSYMQSV…VILTKLYSSN (127 aa)). N-linked (GlcNAc...) asparagine glycosylation is found at asparagine 88, asparagine 96, and asparagine 119. The chain crosses the membrane as a helical span at residues 195-215 (VLFHSLFWPTCMMAGGVAIVA). At 216-235 (MVKLTQYLSLLCERIQRINR) the chain is on the cytoplasmic side.

The protein belongs to the KCNMB (TC 8.A.14.1) family. KCNMB2 subfamily. Interacts with KCNMA1 tetramer. There are probably 4 molecules of KCMNB2 per KCNMA1 tetramer. N-glycosylated. Expressed in kidney, heart and brain. Highly expressed in ovary. Expressed at low level in other tissues.

The protein resides in the membrane. Regulatory subunit of the calcium activated potassium KCNMA1 (maxiK) channel. Modulates the calcium sensitivity and gating kinetics of KCNMA1, thereby contributing to KCNMA1 channel diversity. Acts as a negative regulator that confers rapid and complete inactivation of KCNMA1 channel complex. May participate in KCNMA1 inactivation in chromaffin cells of the adrenal gland or in hippocampal CA1 neurons. The sequence is that of Calcium-activated potassium channel subunit beta-2 (KCNMB2) from Homo sapiens (Human).